A 366-amino-acid chain; its full sequence is Holliday junction branch migration complex subunit RuvB (366 aa).

The interval A3–Y183 is large ATPase domain (RuvB-L). Residues L22, R23, G64, K67, T68, S69, E130–F132, R173, Y183, and R220 contribute to the ATP site. T68 contributes to the Mg(2+) binding site. Positions A184–D254 are small ATPAse domain (RuvB-S). The head domain (RuvB-H) stretch occupies residues G257–G366. 2 residues coordinate DNA: R312 and R317.

It belongs to the RuvB family. As to quaternary structure, homohexamer. Forms an RuvA(8)-RuvB(12)-Holliday junction (HJ) complex. HJ DNA is sandwiched between 2 RuvA tetramers; dsDNA enters through RuvA and exits via RuvB. An RuvB hexamer assembles on each DNA strand where it exits the tetramer. Each RuvB hexamer is contacted by two RuvA subunits (via domain III) on 2 adjacent RuvB subunits; this complex drives branch migration. In the full resolvosome a probable DNA-RuvA(4)-RuvB(12)-RuvC(2) complex forms which resolves the HJ.

It localises to the cytoplasm. It catalyses the reaction ATP + H2O = ADP + phosphate + H(+). In terms of biological role, the RuvA-RuvB-RuvC complex processes Holliday junction (HJ) DNA during genetic recombination and DNA repair, while the RuvA-RuvB complex plays an important role in the rescue of blocked DNA replication forks via replication fork reversal (RFR). RuvA specifically binds to HJ cruciform DNA, conferring on it an open structure. The RuvB hexamer acts as an ATP-dependent pump, pulling dsDNA into and through the RuvAB complex. RuvB forms 2 homohexamers on either side of HJ DNA bound by 1 or 2 RuvA tetramers; 4 subunits per hexamer contact DNA at a time. Coordinated motions by a converter formed by DNA-disengaged RuvB subunits stimulates ATP hydrolysis and nucleotide exchange. Immobilization of the converter enables RuvB to convert the ATP-contained energy into a lever motion, pulling 2 nucleotides of DNA out of the RuvA tetramer per ATP hydrolyzed, thus driving DNA branch migration. The RuvB motors rotate together with the DNA substrate, which together with the progressing nucleotide cycle form the mechanistic basis for DNA recombination by continuous HJ branch migration. Branch migration allows RuvC to scan DNA until it finds its consensus sequence, where it cleaves and resolves cruciform DNA. The protein is Holliday junction branch migration complex subunit RuvB of Frankia alni (strain DSM 45986 / CECT 9034 / ACN14a).